Consider the following 453-residue polypeptide: ACT domain-containing protein ACR3 (453 aa).

ACT domains are found at residues 37–112, 130–212, 266–341, and 344–423; these read LVKV…SASQ, SIEI…KFAR, VINV…RVSE, and SLEL…VPSR.

In terms of tissue distribution, expressed in roots, cotyledons, rosette and cauline leaves, sepals, style, and pedicels and tips of young developing siliques.

May bind amino acids. The sequence is that of ACT domain-containing protein ACR3 from Arabidopsis thaliana (Mouse-ear cress).